The chain runs to 324 residues: Antihemorrhagic factor jMSF (324 aa).

Residues 1–19 (MHFLVALVLLGQIIGSTLS) form the signal peptide. Cystatin fetuin-A-type domains are found at residues 22 to 130 (VRGD…VKCH) and 141 to 254 (RNCP…SDCV). The short motif at 23–25 (RGD) is the Cell attachment site element. Disulfide bonds link cysteine 28–cysteine 315, cysteine 85–cysteine 96, cysteine 110–cysteine 129, cysteine 143–cysteine 146, cysteine 205–cysteine 217, cysteine 230–cysteine 253, and cysteine 287–cysteine 291. Residue asparagine 204 is glycosylated (N-linked (GlcNAc...) asparagine). Asparagine 282 is a glycosylation site (N-linked (GlcNAc...) asparagine).

As to quaternary structure, homodimer. Expressed by the liver.

The protein resides in the secreted. Suppress hemorrhage induced by metalloproteinases from the same venom (brevilysin-H3, -H4, -H6) and from habu venom (weak inhibition of the metalloproteinases HR2A). The non-hemorrhagic brevilysin-H2 is strongly inhibited by jMSF, whereas the brevilysin-L6 is not inhibited. Does not inhibit serine and cysteine proteases such as trypsin, chymotrypsin, thermolysin, and papain. The inhibition may occur by formation of a non-covalent complex between this protein and the proteinases at their metalloproteinase domains. This is Antihemorrhagic factor jMSF from Gloydius blomhoffii (Mamushi).